The following is a 298-amino-acid chain: 4-hydroxy-tetrahydrodipicolinate synthase (298 aa).

Thr48 is a pyruvate binding site. Tyr137 functions as the Proton donor/acceptor in the catalytic mechanism. The active-site Schiff-base intermediate with substrate is the Lys166. Position 207 (Ile207) interacts with pyruvate.

It belongs to the DapA family. Homotetramer; dimer of dimers.

The protein resides in the cytoplasm. The enzyme catalyses L-aspartate 4-semialdehyde + pyruvate = (2S,4S)-4-hydroxy-2,3,4,5-tetrahydrodipicolinate + H2O + H(+). The protein operates within amino-acid biosynthesis; L-lysine biosynthesis via DAP pathway; (S)-tetrahydrodipicolinate from L-aspartate: step 3/4. In terms of biological role, catalyzes the condensation of (S)-aspartate-beta-semialdehyde [(S)-ASA] and pyruvate to 4-hydroxy-tetrahydrodipicolinate (HTPA). This Campylobacter jejuni subsp. jejuni serotype O:6 (strain 81116 / NCTC 11828) protein is 4-hydroxy-tetrahydrodipicolinate synthase.